We begin with the raw amino-acid sequence, 1148 residues long: MTSSDSSVNTTSSSFGNISISSPNHSSSTPPLNNGNGNNVSASETELKKHVLYSLQCLDEKTLTLKVKLDHLNKLVELKKSIPDLNKLGISPTQLYKSVRPFIALPPKTIRTAGLRVMRYYLSNSNNVKELLDLKVQYFITRSLERDKHSEPERIQALKIIRTIMEIDCSLMPHCFVKGLVSIAENQEDNFCRVCLECLTEISIRNPQISSHCGGIRTVFDAVLDPFYQGIQESLLICILYLLSDKDTRIYIRPKSDLEIILAPLTNSFNIGVKLKGASKEKEKEKEKEDEVAMKKWTASSKAVLTLIKSWIGIISLNSDDQGLKSVVDTLRMPQIELQEKALDSIFEIFRVQLPKSIQETFGPQKATQTFNFGSETLQDLPSRTRSLRHNLLNNYLSVLLIAFIDNGLIEGLVYLGNYVANRDGMSEQEKECSKNISLKSTVLLAELLHMSNALLPPSQCAKLQTLPSLVNSAISFRLDPRLRSSSNTMVTNLHSYSHNKSSTTLMDSTLAIGLTGANKWRRIKGQDRRLDKVDDVKMKMEWHMDDNQFQQKIKDTQVLVTKDYQKWSWELMFELLEGPLNNPQHLSNTLKTKFIKRILSFLRPNKKLFSTMAWTTENLKYVRTACVALEVLISHEIGFDFLKDNKTIIQIADMLKVELDYNIKPPPSSSSSSENKKDNVRLLNPEKVLKTMSREYFTMLGTLSSNLLGLEILARNNIFDYIKPLAELPGRDDLSHLIMTSLDYNVNGASRTILQKILTSSSRVVRYLATKYLRFLLRSGVQDFSNWGVELLVQQLNDVDAKVSALSLNVLDEACDDPSCLEVLIDLKPNLLKLGKPGKSLLLRFLSSPKGLENLLQNNGFVEQEEQLWITSENATYVNAIESAVSESLSPSVWRFKEAPDGSSTSGVYLPPHFFGELAKTEKGCQLIRKSNNYQRFLKIIQDPTAKQLDKRASLIAIGHIGSSVDGYSFVKESDTIKLLIGIAEKSQCLALRSTCFYALGMISCIEEAQPIFNSFGWESPSDLNSRILLPKDLKNSTFLSVPQYQYQGSWADHSFETLPSNHFSDPIKNEIISFVGNLSSHITAEGASKNLKRLKIKYPDHFATSEILNAVFILLNTFKYRLGARRFIYDLFDVAIFSSDPYHDLN.

Over residues 1–34 (MTSSDSSVNTTSSSFGNISISSPNHSSSTPPLNN) the composition is skewed to low complexity. Positions 1–41 (MTSSDSSVNTTSSSFGNISISSPNHSSSTPPLNNGNGNNVS) are disordered. The N-terminal Ras-GEF domain maps to 803-914 (KVSALSLNVL…STSGVYLPPH (112 aa)).

This sequence belongs to the RICTOR family. As to quaternary structure, part of a complex, TORC2, consisting of tor, lst8, piaA and ripA. Additional proteins, such as 14-3-3 and heat-shock proteins, may also belong to the TORC2 complex.

Its subcellular location is the cytoplasm. Functionally, regulates cell growth, chemotaxis, signal relay and the actin cytoskeleton. Required for chemoattractant receptor and G protein-mediated activation of the 12 transmembrane domain adenylyl cyclase. Functions as a part of protein complex TORC2. TORC2, is presumed to be indirectly negatively modulated by rapamycin and regulates actin polarization. TORC2, but not TORC1, negatively regulates phagocytosis. This protein and dagA protein CRAC, a cytosolic regulator, are both essential for activation of the enzyme adenylyl cyclase. This protein and CRAC do not function redundantly. Both proteins are integral components of the adenylyl cyclase activation pathway. This is Protein pianissimo A (piaA) from Dictyostelium discoideum (Social amoeba).